Consider the following 442-residue polypeptide: MSTEQDAVLGLAKDLEGINLLTVPNLERGHQSKLCKEKTTSDSSSSRKPSQQRDNYRKRRPKLICIPYTSFLHTGMHNFLTKPPRDIFHESKEVALFTNGRAYTILRKDLIPNLKESIAELYESSLLEAKKRKVPYLGHDLFANIDEFVPMTISELDSVSPCFSYIENWILDNPGKDFKIGKKFTVVTTRHHIVDLTMHLFNRRNRQTSLIVTYMGAGLLSFCRNVKKDSQMSKEGIYSNDPNMKKICYSGFEFENWVTENSKVADLTGSKCPIFSLVESKLSEEIGLLIRCEMDAFNPVSETNTELKCFAPLSMHNSNHRRKLLKTWVQTGLLPNSDIMIGLRDSHSGQLLDIQWYSRDLLCKKFNHPGLPTNKKELNYNAQIAVEWCHYCIEAICKLVEANISDYSSTKPESFEIGIDTNNAIVITKLKTTPRNVELFGM.

The span at 31 to 40 (QSKLCKEKTT) shows a compositional bias: basic and acidic residues. The tract at residues 31-56 (QSKLCKEKTTSDSSSSRKPSQQRDNY) is disordered. Low complexity predominate over residues 41–53 (SDSSSSRKPSQQR). R101 contacts substrate. E255 serves as a coordination point for a divalent metal cation. A substrate-binding site is contributed by E293. Residues D295, E306, and L307 each contribute to the a divalent metal cation site. Residues K308 and Q330 each coordinate substrate.

It belongs to the DXO/Dom3Z family. It depends on a divalent metal cation as a cofactor.

The protein localises to the cytoplasm. The enzyme catalyses a 5'-end NAD(+)-phospho-ribonucleoside in mRNA + H2O = a 5'-end phospho-ribonucleoside in mRNA + NAD(+) + H(+). The catalysed reaction is a 5'-end (N(7)-methyl 5'-triphosphoguanosine)-ribonucleoside-ribonucleotide in mRNA + H2O = a (N(7)-methyl 5'-triphosphoguanosine)-nucleoside + a 5'-end phospho-ribonucleoside in mRNA + H(+). In terms of biological role, decapping enzyme for NAD-capped RNAs: specifically hydrolyzes the nicotinamide adenine dinucleotide (NAD) cap from a subset of RNAs by removing the entire NAD moiety from the 5'-end of an NAD-capped RNA. The NAD-cap is present at the 5'-end of some RNAs and snoRNAs. In contrast to the canonical 5'-end N7 methylguanosine (m7G) cap, the NAD cap promotes mRNA decay. Also acts as a non-canonical decapping enzyme that removes the entire cap structure of m7G capped or incompletely capped RNAs. Has decapping activity toward incomplete 5'-end m7G cap mRNAs such as unmethylated 5'-end-capped RNA (cap0), while it has no activity toward 2'-O-ribose methylated m7G cap (cap1). Also has 5'-3' exonuclease activity. The chain is Decapping and exoribonuclease protein 1 (DXO1) from Saccharomyces cerevisiae (strain ATCC 204508 / S288c) (Baker's yeast).